Consider the following 358-residue polypeptide: tRNA-specific 2-thiouridylase MnmA (358 aa).

ATP-binding positions include Ala7–Ser14 and Leu33. The active-site Nucleophile is the Cys101. An intrachain disulfide couples Cys101 to Cys197. Position 125 (Gly125) interacts with ATP. The tract at residues Lys147 to Gln149 is interaction with tRNA. Cys197 (cysteine persulfide intermediate) is an active-site residue.

This sequence belongs to the MnmA/TRMU family.

It localises to the cytoplasm. It catalyses the reaction S-sulfanyl-L-cysteinyl-[protein] + uridine(34) in tRNA + AH2 + ATP = 2-thiouridine(34) in tRNA + L-cysteinyl-[protein] + A + AMP + diphosphate + H(+). Its function is as follows. Catalyzes the 2-thiolation of uridine at the wobble position (U34) of tRNA, leading to the formation of s(2)U34. This is tRNA-specific 2-thiouridylase MnmA from Rickettsia typhi (strain ATCC VR-144 / Wilmington).